Consider the following 118-residue polypeptide: Large ribosomal subunit protein uL18 (118 aa).

The interval 1-25 (MITKPDKNKVRQKRHRRVRGKLSGT) is disordered. A compositionally biased stretch (basic residues) spans 10–20 (VRQKRHRRVRG).

This sequence belongs to the universal ribosomal protein uL18 family. Part of the 50S ribosomal subunit; part of the 5S rRNA/L5/L18/L25 subcomplex. Contacts the 5S and 23S rRNAs.

Functionally, this is one of the proteins that bind and probably mediate the attachment of the 5S RNA into the large ribosomal subunit, where it forms part of the central protuberance. This chain is Large ribosomal subunit protein uL18, found in Streptococcus gordonii (strain Challis / ATCC 35105 / BCRC 15272 / CH1 / DL1 / V288).